The primary structure comprises 428 residues: Phosphomethylpyrimidine synthase (428 aa).

Substrate contacts are provided by residues N66, M95, Y124, H163, 185-187 (SRG), 226-229 (DGLR), and E265. H269 lines the Zn(2+) pocket. Y292 serves as a coordination point for substrate. H333 contacts Zn(2+). Residues C407, C410, and C414 each contribute to the [4Fe-4S] cluster site.

This sequence belongs to the ThiC family. Requires [4Fe-4S] cluster as cofactor.

The enzyme catalyses 5-amino-1-(5-phospho-beta-D-ribosyl)imidazole + S-adenosyl-L-methionine = 4-amino-2-methyl-5-(phosphooxymethyl)pyrimidine + CO + 5'-deoxyadenosine + formate + L-methionine + 3 H(+). The protein operates within cofactor biosynthesis; thiamine diphosphate biosynthesis. Its function is as follows. Catalyzes the synthesis of the hydroxymethylpyrimidine phosphate (HMP-P) moiety of thiamine from aminoimidazole ribotide (AIR) in a radical S-adenosyl-L-methionine (SAM)-dependent reaction. In Thermococcus kodakarensis (strain ATCC BAA-918 / JCM 12380 / KOD1) (Pyrococcus kodakaraensis (strain KOD1)), this protein is Phosphomethylpyrimidine synthase.